The sequence spans 609 residues: UvrABC system protein C (609 aa).

The GIY-YIG domain maps to 16 to 94 (SSAGVYRMYD…IKQYMPKYNV (79 aa)). Residues 203 to 238 (QQVISALVDKMELAAERQAYEQAARFRDQIMALRKV) enclose the UVR domain.

Belongs to the UvrC family. Interacts with UvrB in an incision complex.

The protein resides in the cytoplasm. Its function is as follows. The UvrABC repair system catalyzes the recognition and processing of DNA lesions. UvrC both incises the 5' and 3' sides of the lesion. The N-terminal half is responsible for the 3' incision and the C-terminal half is responsible for the 5' incision. The protein is UvrABC system protein C of Shewanella baltica (strain OS185).